The primary structure comprises 619 residues: Dynein axonemal intermediate chain 2 (619 aa).

WD repeat units follow at residues 214–254 (KPSS…LVAE), 261–302 (SHRD…EPTE), 362–401 (GHHGPIYALQRNPFYPKNFLTVGDWAARIWSEESRESSIM), 405–445 (YHMA…CDPA), and 450–489 (VCDDPLFCLRVQDTGCLIACGSELGTTTLLEVSSSLSTLQ). The tract at residues 566-619 (EALKKKPKPKKASIEVEGEDELEDIAGEEEESGIIMGEDTGEDDMDEKNEGGAP) is disordered. Residues 581–597 (VEGEDELEDIAGEEEES) are compositionally biased toward acidic residues.

This sequence belongs to the dynein intermediate chain family. Consists of at least two heavy chains and a number of intermediate and light chains. Interacts with DNAAF2. Interacts with DNAAF6/PIH1D3. Interacts with HEATR2; probably involved in outer arm dynein assembly. Interacts with CFAP53.

The protein localises to the cytoplasm. It localises to the cytoskeleton. The protein resides in the cilium axoneme. Its subcellular location is the dynein axonemal particle. Functionally, part of the dynein complex of respiratory cilia. The sequence is that of Dynein axonemal intermediate chain 2 (Dnai2) from Rattus norvegicus (Rat).